A 175-amino-acid polypeptide reads, in one-letter code: Nucleoside triphosphate/diphosphate phosphatase (175 aa).

Arginine 23 acts as the Proton donor in catalysis. 6 residues coordinate Mg(2+): asparagine 87, aspartate 103, aspartate 105, aspartate 107, aspartate 120, and glutamate 123.

This sequence belongs to the Ntdp family. Mg(2+) serves as cofactor.

The catalysed reaction is a ribonucleoside 5'-triphosphate + H2O = a ribonucleoside 5'-diphosphate + phosphate + H(+). It carries out the reaction a ribonucleoside 5'-diphosphate + H2O = a ribonucleoside 5'-phosphate + phosphate + H(+). Functionally, has nucleoside phosphatase activity towards nucleoside triphosphates and nucleoside diphosphates. In Shouchella clausii (strain KSM-K16) (Alkalihalobacillus clausii), this protein is Nucleoside triphosphate/diphosphate phosphatase.